Here is a 527-residue protein sequence, read N- to C-terminus: Catalase (527 aa).

The span at methionine 1–glutamine 22 shows a compositional bias: basic and acidic residues. The interval methionine 1–proline 34 is disordered. Position 2 is an N-acetylserine (serine 2). The residue at position 9 (serine 9) is a Phosphoserine. Lysine 13 bears the N6-succinyllysine mark. Serine 21 carries the phosphoserine modification. Residues histidine 75 and asparagine 148 contribute to the active site. Positions 194, 201, 203, and 213 each coordinate NADP(+). Position 221 is an N6-succinyllysine (lysine 221). At lysine 233 the chain carries N6-acetyllysine. Lysine 237, tryptophan 303, histidine 305, and lysine 306 together coordinate NADP(+). Lysine 306 is modified (N6-acetyllysine; alternate). At lysine 306 the chain carries N6-succinyllysine; alternate. Tyrosine 358 contributes to the heme binding site. Residues serine 417 and serine 422 each carry the phosphoserine modification. Lysine 430 carries the N6-acetyllysine; alternate modification. Lysine 430 bears the N6-succinyllysine; alternate mark. Position 434 is a phosphoserine (serine 434). 2 positions are modified to N6-acetyllysine; alternate: lysine 449 and lysine 480. Residues lysine 449 and lysine 480 each carry the N6-succinyllysine; alternate modification. The residue at position 499 (lysine 499) is an N6-acetyllysine. Threonine 511 is modified (phosphothreonine). At serine 517 the chain carries Phosphoserine. Lysine 522 bears the N6-succinyllysine mark. A Microbody targeting signal; atypical motif is present at residues lysine 524–leucine 527.

It belongs to the catalase family. Homotetramer. Interacts (via microbody targeting signal) with PEX5, monomeric form interacts with PEX5, leading to its translocation into peroxisomes. Heme is required as a cofactor. Requires NADP(+) as cofactor.

It localises to the peroxisome matrix. The catalysed reaction is 2 H2O2 = O2 + 2 H2O. In terms of biological role, catalyzes the degradation of hydrogen peroxide (H(2)O(2)) generated by peroxisomal oxidases to water and oxygen, thereby protecting cells from the toxic effects of hydrogen peroxide. Promotes growth of cells including T-cells, B-cells, myeloid leukemia cells, melanoma cells, mastocytoma cells and normal and transformed fibroblast cells. This chain is Catalase (Cat), found in Mus musculus (Mouse).